Here is a 661-residue protein sequence, read N- to C-terminus: MLLDGTLIQLLFLLGFMVFMVMLFQRAHIPASIAYLLVGVLLGAHTAGPVISEGYIHKIAEFGIVFLLFTIGLRFSWQQIYQLRHTILGLGTAQVGLTTLLVALLLWAMGVASVVAFVIGAVFAQSSTTIISKQLLEQGEDQSRHGRLGISLSVFQDITAVPFIIVIPVLGVAMAQDIASTLGMALFKAVLATALVVLVGRYLLRHLFHRVSSSDSAELFTLTVLLVCLAAAWLTQSLGLSMAFGAFLAGMVMGETEFKLQVEAAIRPFRDVLLGIFFVSIGMLLDPMLLPEIGHIALAGALLLLLIKIVLVTALVLATGVALETAFRTGLILAVGGEFGFALLALALEGGTLDSRSSQIILTSVLLSMMLAVFLIRYNLQLSRFVVGRWIGQAAVSSEPFDDIEQHGLQQHVVIAGFGRIGQGVAQFLQKEQVPYIGLDLDAARVKNARLADVPVFYADSTDPDTLIAVGLAKARLLVISHEDLSAALTTLRHARTLHPDLPVIVRTRDESHVAELRQAGATEVIPETIEAGMMLTSHVLLMLNVPARRVNQLVQEQRINRYQLLRQQFRGSADLLKTQQQEQLKAVLLAEGSPAIDQSLQMLDLAQYGIQLTELVRAHNRIEQPSLDMVLQENDVLVLFGSAEALEQASLVLTHRLAAD.

Helical transmembrane passes span 5–25 (GTLIQLLFLLGFMVFMVMLFQ), 31–51 (ASIAYLLVGVLLGAHTAGPVI), 53–73 (EGYIHKIAEFGIVFLLFTIGL), 100–120 (LLVALLLWAMGVASVVAFVIG), 154–174 (VFQDITAVPFIIVIPVLGVAM), 178–198 (IASTLGMALFKAVLATALVVL), 224–244 (VLLVCLAAAWLTQSLGLSMAF), 273–293 (LLGIFFVSIGMLLDPMLLPEI), 296–316 (IALAGALLLLLIKIVLVTALV), 330–350 (GLILAVGGEFGFALLALALEG), and 360–380 (IILTSVLLSMMLAVFLIRYNL). Positions 410-527 (QQHVVIAGFG…RQAGATEVIP (118 aa)) constitute an RCK N-terminal domain. The region spanning 571–656 (RGSADLLKTQ…LEQASLVLTH (86 aa)) is the RCK C-terminal domain.

The protein belongs to the monovalent cation:proton antiporter 2 (CPA2) transporter (TC 2.A.37) family. KEA (TC 2.A.37.1) subfamily.

The protein localises to the cell membrane. Its function is as follows. May operate as a K(+)/H(+) antiporter. This is Putative K(+) efflux antiporter KefB (kefB) from Alkalimonas amylolytica.